The sequence spans 1723 residues: Homeobox protein 5 (1723 aa).

The span at 36 to 50 (QLQQPQHQPQHYQQQ) shows a compositional bias: low complexity. Disordered regions lie at residues 36-425 (QLQQ…APGT), 440-522 (SSSP…QLQQ), 543-756 (ENIT…PPLT), 878-978 (GTIV…TGSL), 1080-1214 (IFNN…SENN), 1226-1264 (VSLGSLPTNTPSSMEIEQQQQQQQQQQQQQQQQHLNQQQ), 1345-1399 (IVNN…TQTS), 1456-1498 (QQQQ…STTT), and 1513-1547 (HNQQVSPISPRSPRSPHGTSGDYNDGSQSPSSRRK). The segment covering 51 to 72 (DSFVSPNLDNNNPQIHVQSNNY) has biased composition (polar residues). Low complexity-rich tracts occupy residues 73–107 (NQNGFVGYNNSNNNNNNNQHMNNQYSNSFHNNNSS) and 114–212 (NNSS…NNNN). 2 stretches are compositionally biased toward polar residues: residues 223 to 237 (SQPTSPYNNPIQHNP) and 244 to 257 (GQHNPFNGNQMVMD). Low complexity-rich tracts occupy residues 258–284 (NNNNNNNNNNSNVFNSNSNSNVFNSNS) and 291–350 (NNNN…NNNN). The stretch at 300–351 (YNNNNNNNNNNNSNSNNNNNNNNNNNNNNNNNNNNNNNNNNNNNSNNNNNNQ) forms a coiled coil. Polar residues predominate over residues 351 to 369 (QFSQSYDSTLGNNRFSSMM). Low complexity-rich tracts occupy residues 371 to 421 (QPIQ…LIGS) and 440 to 465 (SSSPTSSPSSPVKKGKSQSALALSSS). Over residues 483 to 510 (MSSITNTNLKSTQASTLKESKRSNSSPN) the composition is skewed to polar residues. Composition is skewed to low complexity over residues 511 to 522 (LKKQMQLQQLQQ), 544 to 571 (NITNNNNNNNNNNNNNNNNNNNNNITNN), and 581 to 593 (NSNNINQSSDSIN). Positions 632 to 655 (HISTTQQSPSLNGSTGGSMLTPTM) are enriched in polar residues. Over residues 660–669 (LSGGGSGGGF) the composition is skewed to gly residues. A compositionally biased stretch (polar residues) spans 673–685 (ISPTGTTSNKDLQ). Composition is skewed to low complexity over residues 686 to 699 (SSPSPSPLLKSMSM), 710 to 727 (SMSSPLSPNSSLSSSNGL), and 734 to 745 (SNNMNSSGGIPT). The span at 746-755 (PSTPTSPPPL) shows a compositional bias: pro residues. A compositionally biased stretch (low complexity) spans 882 to 928 (NPTNVNNNNINNNNNNNNNNNNNNNNNNNNNNNNNNNNTTTTTTTTT). A compositionally biased stretch (polar residues) spans 929–945 (SANTVQSGTTSNSNLVF). 2 stretches are compositionally biased toward low complexity: residues 946-977 (QQTSNSNTLSPSQQQQQQTQQQQSINGSSTGS) and 1082-1146 (NNNN…SINS). 2 stretches are compositionally biased toward polar residues: residues 1147-1159 (PRPSTPTTLNSSG) and 1176-1187 (DISTGLMASSDQ). A coiled-coil region spans residues 1193 to 1270 (QQQQHQQLVN…NQQQILHQQL (78 aa)). The segment covering 1194-1214 (QQQHQQLVNNNNNNMNNSENN) has biased composition (low complexity). Residues 1226–1242 (VSLGSLPTNTPSSMEIE) are compositionally biased toward polar residues. Low complexity-rich tracts occupy residues 1243 to 1264 (QQQQQQQQQQQQQQQQHLNQQQ), 1347 to 1384 (NNQNNNNNDQNNNNNNNNNNNSTTNSNVNNNNNTTNTP), 1456 to 1480 (QQQQQQQETPHTPTSNSISSPRSSP), 1487 to 1498 (SNTNTTTTSTTT), and 1518 to 1528 (SPISPRSPRSP). A coiled-coil region spans residues 1431–1464 (VLQQQQQQQQQQQQQQQQQQQQQQQQQQQQQQET). Residues 1529-1543 (HGTSGDYNDGSQSPS) show a composition bias toward polar residues. The segment at residues 1543 to 1607 (SSRRKNRFTD…NKRARSRPSP (65 aa)) is a DNA-binding region (homeobox). The EF-hand domain occupies 1553–1588 (FQIKRMNDCFENLDKNNNGKFTSEEICQIATELGLT). Disordered stretches follow at residues 1598 to 1625 (NKRARSRPSPRGQPTNPLTSSTNNGNNS) and 1661 to 1723 (LHQQ…TINE). The segment covering 1612 to 1625 (TNPLTSSTNNGNNS) has biased composition (low complexity). A coiled-coil region spans residues 1632 to 1702 (LQQQHLQQVQ…NNNNNNNNNN (71 aa)). Residues 1665–1675 (SANTTPQLNSM) are compositionally biased toward polar residues. The span at 1676-1723 (NPNSINYNNNNNNNNNNNNNNNNNNNNNNNNNNNNNNIINNNITTINE) shows a compositional bias: low complexity.

Its subcellular location is the nucleus. In terms of biological role, putative transcription factor. The protein is Homeobox protein 5 (hbx5-1) of Dictyostelium discoideum (Social amoeba).